The sequence spans 511 residues: Ribose import ATP-binding protein RbsA (511 aa).

ABC transporter domains are found at residues 13–249 (VSMD…VGRA) and 260–503 (ALGE…AGIA). Position 45–52 (45–52 (GENGAGKS)) interacts with ATP.

This sequence belongs to the ABC transporter superfamily. Ribose importer (TC 3.A.1.2.1) family. In terms of assembly, the complex is composed of an ATP-binding protein (RbsA), two transmembrane proteins (RbsC) and a solute-binding protein (RbsB).

It localises to the cell inner membrane. The catalysed reaction is D-ribose(out) + ATP + H2O = D-ribose(in) + ADP + phosphate + H(+). Functionally, part of the ABC transporter complex RbsABC involved in ribose import. Responsible for energy coupling to the transport system. The sequence is that of Ribose import ATP-binding protein RbsA from Roseobacter denitrificans (strain ATCC 33942 / OCh 114) (Erythrobacter sp. (strain OCh 114)).